The chain runs to 722 residues: Polyribonucleotide nucleotidyltransferase (722 aa).

Asp495 and Asp501 together coordinate Mg(2+). One can recognise a KH domain in the interval 562-621; it reads PRLLSFRIDPELIGTVIGPGGRTIKGITERTNTKIDIEDGGIVTIASHDGAAAEEAQRII. The S1 motif domain occupies 631 to 699; sequence GEIFPGSITR…NRGRINLTLR (69 aa). Positions 700 to 722 are disordered; the sequence is GVSQNGGMSNYPEPTPTPVAPLT. The span at 712-722 shows a compositional bias: pro residues; it reads EPTPTPVAPLT.

Belongs to the polyribonucleotide nucleotidyltransferase family. Mg(2+) serves as cofactor.

It is found in the cytoplasm. The catalysed reaction is RNA(n+1) + phosphate = RNA(n) + a ribonucleoside 5'-diphosphate. Its function is as follows. Involved in mRNA degradation. Catalyzes the phosphorolysis of single-stranded polyribonucleotides processively in the 3'- to 5'-direction. This chain is Polyribonucleotide nucleotidyltransferase, found in Prochlorococcus marinus (strain NATL1A).